A 303-amino-acid polypeptide reads, in one-letter code: Oxygen-dependent coproporphyrinogen-III oxidase (303 aa).

Residue serine 94 coordinates substrate. A divalent metal cation-binding residues include histidine 98 and histidine 108. Histidine 108 (proton donor) is an active-site residue. 110-112 is a binding site for substrate; it reads NVR. Positions 147 and 177 each coordinate a divalent metal cation. The important for dimerization stretch occupies residues 242 to 277; that stretch reads YVEFNLVYDRGTLFGLQTGGRTESILMSLPPLVRWE. 260 to 262 contributes to the substrate binding site; it reads GGR.

The protein belongs to the aerobic coproporphyrinogen-III oxidase family. In terms of assembly, homodimer. A divalent metal cation serves as cofactor.

The protein localises to the cytoplasm. It carries out the reaction coproporphyrinogen III + O2 + 2 H(+) = protoporphyrinogen IX + 2 CO2 + 2 H2O. It participates in porphyrin-containing compound metabolism; protoporphyrin-IX biosynthesis; protoporphyrinogen-IX from coproporphyrinogen-III (O2 route): step 1/1. Involved in the heme biosynthesis. Catalyzes the aerobic oxidative decarboxylation of propionate groups of rings A and B of coproporphyrinogen-III to yield the vinyl groups in protoporphyrinogen-IX. This chain is Oxygen-dependent coproporphyrinogen-III oxidase, found in Saccharophagus degradans (strain 2-40 / ATCC 43961 / DSM 17024).